We begin with the raw amino-acid sequence, 268 residues long: Probable 6-phosphogluconolactonase 1 (268 aa).

Belongs to the glucosamine/galactosamine-6-phosphate isomerase family. 6-phosphogluconolactonase subfamily.

It localises to the cytoplasm. It is found in the cytosol. It carries out the reaction 6-phospho-D-glucono-1,5-lactone + H2O = 6-phospho-D-gluconate + H(+). It functions in the pathway carbohydrate degradation; pentose phosphate pathway; D-ribulose 5-phosphate from D-glucose 6-phosphate (oxidative stage): step 2/3. In terms of biological role, catalyzes the hydrolysis of 6-phosphogluconolactone to 6-phosphogluconate. This Arabidopsis thaliana (Mouse-ear cress) protein is Probable 6-phosphogluconolactonase 1.